Consider the following 94-residue polypeptide: Cell division topological specificity factor (94 aa).

It belongs to the MinE family.

In terms of biological role, prevents the cell division inhibition by proteins MinC and MinD at internal division sites while permitting inhibition at polar sites. This ensures cell division at the proper site by restricting the formation of a division septum at the midpoint of the long axis of the cell. The sequence is that of Cell division topological specificity factor from Synechococcus sp. (strain CC9311).